A 604-amino-acid chain; its full sequence is Putative O-acetyltransferase SAR0937 (604 aa).

The next 11 helical transmembrane spans lie at 15–35 (YMPGLDGLRAIAVLGIIIYHL), 43–63 (GFLGVDTFFVISGYLITSLLL), 85–105 (LLPAVIVLLMVVGTATLLLKS), 150–170 (AIEEQFYIFFPVILVTLLLTI), 176–196 (IGFIFWGVSIISLGLMMFIYS), 212–232 (LQTLLLGVILAFLWPPFKLKN), 240–260 (YVIDSIGSLSFIVLILLFFII), 267–287 (IYDGGFYLISILTLFIIASVV), 310–330 (YSLYLWHFAVISFVHSYYVDG), 332–352 (IPVYVYFIDISLTIIFAELSY), and 377–397 (FIRMVIVVTLLIPFMLILVGA). Residues Ser-459, Asp-581, and His-584 contribute to the active site.

The protein belongs to the acyltransferase 3 family.

It localises to the cell membrane. This chain is Putative O-acetyltransferase SAR0937, found in Staphylococcus aureus (strain MRSA252).